The sequence spans 382 residues: Polyadenylate-binding protein 5 (382 aa).

RRM domains are found at residues alanine 18–proline 96, glycine 106–phenylalanine 182, threonine 199–lysine 276, and valine 302–alanine 378.

It is found in the cytoplasm. In terms of biological role, binds the poly(A) tail of mRNA. May be involved in cytoplasmic regulatory processes of mRNA metabolism. Can probably bind to cytoplasmic RNA sequences other than poly(A) in vivo. The chain is Polyadenylate-binding protein 5 (PABPC5) from Macaca mulatta (Rhesus macaque).